The chain runs to 55 residues: Mitochondrial import receptor subunit TOM7 homolog (55 aa).

The Cytoplasmic portion of the chain corresponds to 1 to 20 (MVKLSKEAKQRLQQLFKGGQ). Residues 21-40 (FAIRWGFIPLVIYLGFTRGA) form a helical membrane-spanning segment. The Mitochondrial intermembrane portion of the chain corresponds to 41-55 (DPGMPEPSVLSLLWG).

Belongs to the Tom7 family. In terms of assembly, forms part of the preprotein translocase complex of the outer mitochondrial membrane (TOM complex) which consists of at least 7 different proteins (TOMM5, TOMM6, TOMM7, TOMM20, TOMM22, TOMM40 and TOMM70).

The protein localises to the mitochondrion outer membrane. Its function is as follows. Required for assembly and stability of the TOM complex. Positive regulator of PRKN translocation to damaged mitochondria. Acts probably by stabilizing PINK1 on the outer membrane of depolarized mitochondria. The chain is Mitochondrial import receptor subunit TOM7 homolog (Tomm7) from Mus musculus (Mouse).